The following is a 761-amino-acid chain: MGKNRKSKRQLVRDEKRAKKRGLEIEHEEERDIKKQRREEEAHQDAFAPVTDAGYVPPPLDGTYDENAFPGGPEEGRRNGPNTNFEREFFGMLAEQEQEYFRHADELLELNDFPSTEERDIFLQNVYKELRGKELKVASSQSCSRLMERLILLSNTRQKKSLFDAFGGHFISLVTHRFASHCCEKLFLQSAPVVTQELSGEYEQEPLPEGEEETEAMKSSMEDLFLLTLDELEEHLGYLLTDRFGSHAIRALLVILSGRPLDQAGTKSMLQSRKKEYITVEGAAANQSELSSQIRAVPSSFTMAIKKIIDDSTMTMDATALRVLAKHPTGNPTLQLLLELELTMFVKGKEKKEKNKQKKDDEEAEEKKEETQSEVTLLGMLVPDAPAAFADNTTQAAEFVNSMIYDPIGSRLLETLITHCPGKIFKGLQQHIFGPRIQSLLRNDIACYPAIKVLNRLSREDLADAVEKSLPEMASFVDKGRFNVIRTLFERCHIRNGTDEINALLKALTSAYGNDWKKLVPKLCMLDEDVVEEEQKPDPKFQTQEAKNKAFMLNHGCQLVAALLAIPGQPSKAIQASLAALKPAQVMKMATTSHNTSSILVKALQTPATNPTFHKVLVSSLLPHVYELATSQQGSAVLNEIISLPSKPAEPNAPAVPFHMKENIISQLANYESELRETWLGRNVWRTWKGDMWSHRRHDWVRWAKETDPETARVAAIPRKREEKEKEEAEKKPKGYLGKNFDPKKLKGFAAKKFEKKEAEA.

Residues 1 to 10 are compositionally biased toward basic residues; the sequence is MGKNRKSKRQ. The disordered stretch occupies residues 1 to 56; that stretch reads MGKNRKSKRQLVRDEKRAKKRGLEIEHEEERDIKKQRREEEAHQDAFAPVTDAGYV. Positions 11–44 are enriched in basic and acidic residues; that stretch reads LVRDEKRAKKRGLEIEHEEERDIKKQRREEEAHQ. 3 Pumilio repeats span residues 129–164, 165–200, and 231–271; these read ELRG…SLFD, AFGG…ELSG, and ELEE…SMLQ. A compositionally biased stretch (basic and acidic residues) spans 350–371; sequence EKKEKNKQKKDDEEAEEKKEET. A disordered region spans residues 350-372; sequence EKKEKNKQKKDDEEAEEKKEETQ. Pumilio repeat units follow at residues 395–430, 432–467, and 620–666; these read QAAE…GLQQ, IFGP…DAVE, and SLLP…NIIS. The disordered stretch occupies residues 712 to 739; sequence ARVAAIPRKREEKEKEEAEKKPKGYLGK. The segment covering 719–733 has biased composition (basic and acidic residues); it reads RKREEKEKEEAEKKP.

It belongs to the NOP9 family.

The protein resides in the nucleus. Its subcellular location is the nucleolus. RNA-binding nucleolar protein required for pre-rRNA processing. Involved in production of 18S rRNA and assembly of small ribosomal subunit. This Sordaria macrospora (strain ATCC MYA-333 / DSM 997 / K(L3346) / K-hell) protein is Nucleolar protein 9 (NOP9).